A 187-amino-acid chain; its full sequence is Elongation factor P (187 aa).

The protein belongs to the elongation factor P family.

It localises to the cytoplasm. It participates in protein biosynthesis; polypeptide chain elongation. In terms of biological role, involved in peptide bond synthesis. Stimulates efficient translation and peptide-bond synthesis on native or reconstituted 70S ribosomes in vitro. Probably functions indirectly by altering the affinity of the ribosome for aminoacyl-tRNA, thus increasing their reactivity as acceptors for peptidyl transferase. This chain is Elongation factor P, found in Acidothermus cellulolyticus (strain ATCC 43068 / DSM 8971 / 11B).